The primary structure comprises 99 residues: Ubiquitin-related modifier 1 homolog 2 (99 aa).

At G99 the chain carries 1-thioglycine. Residue G99 forms a Glycyl lysine isopeptide (Gly-Lys) (interchain with K-? in acceptor proteins) linkage.

Belongs to the URM1 family. In terms of processing, C-terminal thiocarboxylation occurs in 2 steps, it is first acyl-adenylated (-COAMP) via the hesA/moeB/thiF part of the MOCS3 homolog, then thiocarboxylated (-COSH) via the rhodanese domain of the MOCS3 homolog.

It localises to the cytoplasm. It functions in the pathway tRNA modification; 5-methoxycarbonylmethyl-2-thiouridine-tRNA biosynthesis. Its function is as follows. Acts as a sulfur carrier required for 2-thiolation of mcm(5)S(2)U at tRNA wobble positions of cytosolic tRNA(Lys), tRNA(Glu) and tRNA(Gln). Serves as sulfur donor in tRNA 2-thiolation reaction by being thiocarboxylated (-COSH) at its C-terminus by MOCS3. The sulfur is then transferred to tRNA to form 2-thiolation of mcm(5)S(2)U. Also acts as a ubiquitin-like protein (UBL) that is covalently conjugated via an isopeptide bond to lysine residues of target proteins. The thiocarboxylated form serves as substrate for conjugation and oxidative stress specifically induces the formation of UBL-protein conjugates. In Arabidopsis thaliana (Mouse-ear cress), this protein is Ubiquitin-related modifier 1 homolog 2.